We begin with the raw amino-acid sequence, 201 residues long: Recombination protein RecR (201 aa).

The C4-type zinc-finger motif lies at 57-72 (CKYCANFTNKDECDIC). The Toprim domain occupies 80-176 (TKLMIVTTNE…QIYRIGFGIP (97 aa)).

This sequence belongs to the RecR family.

Its function is as follows. May play a role in DNA repair. It seems to be involved in an RecBC-independent recombinational process of DNA repair. It may act with RecF and RecO. The chain is Recombination protein RecR from Ureaplasma parvum serovar 3 (strain ATCC 27815 / 27 / NCTC 11736).